The following is a 514-amino-acid chain: ATP synthase subunit alpha (514 aa).

170–177 (GDRQTGKT) is an ATP binding site.

This sequence belongs to the ATPase alpha/beta chains family. F-type ATPases have 2 components, CF(1) - the catalytic core - and CF(0) - the membrane proton channel. CF(1) has five subunits: alpha(3), beta(3), gamma(1), delta(1), epsilon(1). CF(0) has three main subunits: a(1), b(2) and c(9-12). The alpha and beta chains form an alternating ring which encloses part of the gamma chain. CF(1) is attached to CF(0) by a central stalk formed by the gamma and epsilon chains, while a peripheral stalk is formed by the delta and b chains.

The protein resides in the cell inner membrane. It catalyses the reaction ATP + H2O + 4 H(+)(in) = ADP + phosphate + 5 H(+)(out). Produces ATP from ADP in the presence of a proton gradient across the membrane. The alpha chain is a regulatory subunit. This is ATP synthase subunit alpha from Psychrobacter arcticus (strain DSM 17307 / VKM B-2377 / 273-4).